A 247-amino-acid polypeptide reads, in one-letter code: Dihydroorotate dehydrogenase B (NAD(+)), electron transfer subunit (247 aa).

Positions 2-96 constitute an FAD-binding FR-type domain; it reads RWKMKARVLS…TGPHGNGFEI (95 aa). FAD-binding positions include 49–52, 64–66, and 71–72; these read RPFS, LYQ, and GT. [2Fe-2S] cluster-binding residues include cysteine 210, cysteine 215, cysteine 218, and cysteine 234.

It belongs to the PyrK family. In terms of assembly, heterotetramer of 2 PyrK and 2 PyrD type B subunits. [2Fe-2S] cluster serves as cofactor. FAD is required as a cofactor.

It participates in pyrimidine metabolism; UMP biosynthesis via de novo pathway; orotate from (S)-dihydroorotate (NAD(+) route): step 1/1. In terms of biological role, responsible for channeling the electrons from the oxidation of dihydroorotate from the FMN redox center in the PyrD type B subunit to the ultimate electron acceptor NAD(+). This is Dihydroorotate dehydrogenase B (NAD(+)), electron transfer subunit from Caldanaerobacter subterraneus subsp. tengcongensis (strain DSM 15242 / JCM 11007 / NBRC 100824 / MB4) (Thermoanaerobacter tengcongensis).